Consider the following 220-residue polypeptide: Ribosomal RNA small subunit methyltransferase G (220 aa).

S-adenosyl-L-methionine-binding residues include G78, L83, and R144.

Belongs to the methyltransferase superfamily. RNA methyltransferase RsmG family.

The protein resides in the cytoplasm. It catalyses the reaction guanosine(527) in 16S rRNA + S-adenosyl-L-methionine = N(7)-methylguanosine(527) in 16S rRNA + S-adenosyl-L-homocysteine. Functionally, specifically methylates the N7 position of guanine in position 527 of 16S rRNA. The chain is Ribosomal RNA small subunit methyltransferase G from Alkalilimnicola ehrlichii (strain ATCC BAA-1101 / DSM 17681 / MLHE-1).